The primary structure comprises 277 residues: Glycerol-3-phosphate acyltransferase (277 aa).

Helical transmembrane passes span 3 to 23, 55 to 75, 79 to 99, 111 to 131, and 155 to 175; these read LFIFLILVGYLMGSINSAIIV, IMVMVFDALKGILPVILAKLL, PVTVAFTALAAVVGHMYPVFF, IGALLAFHFVIGVMVAATWLL, and LILVGNLNIFPPLFMITILVL. Positions 207–277 are disordered; that stretch reads SPATSAEQEF…PKTKTVKEKE (71 aa). Over residues 216-239 the composition is skewed to basic and acidic residues; the sequence is FPGKEVIDTNIDETEKTEQAEAVK. Basic residues-rich tracts occupy residues 240–253 and 262–271; these read KPKVKKATTKAKKT and KPKSTKPKTK.

The protein belongs to the PlsY family. As to quaternary structure, probably interacts with PlsX.

It is found in the cell inner membrane. It catalyses the reaction an acyl phosphate + sn-glycerol 3-phosphate = a 1-acyl-sn-glycero-3-phosphate + phosphate. It functions in the pathway lipid metabolism; phospholipid metabolism. Its function is as follows. Catalyzes the transfer of an acyl group from acyl-phosphate (acyl-PO(4)) to glycerol-3-phosphate (G3P) to form lysophosphatidic acid (LPA). This enzyme utilizes acyl-phosphate as fatty acyl donor, but not acyl-CoA or acyl-ACP. The sequence is that of Glycerol-3-phosphate acyltransferase from Legionella pneumophila (strain Corby).